We begin with the raw amino-acid sequence, 456 residues long: MARRAREEEADQVERKLVLGRYELGRLLGQGTFAKVYYGRDLRSGESVAIKVIDKARLRRTEGMVEQLRREISIMRMVRHPNVVGIREVLASRARVFVVMEYARGGELFAKVARGRLTEEHARRYFQQLVAAVGFCHGRGVAHRDLKPENLLLDEEGRLKVTDFGLAALPEQLRQDGLLHTQCGTPAYVAPEVLRKRGYDGARADLWSCGVVLYVLLCGFLPFQHENYAKMYQKIFKAEYQVPPWVSGDARRLIVRLLVVDPAKRISIPEIMRTPWFKKGFVPPVPTSPVSPKKWEEDDVLLDGGDSGAMSPRTCNAFQLISSMSSGFDLSGMFESEQKAATVFTSRAPAATVIQKLEAVGRSLGYSATRGKGWKLRLEATADGANGRLAVTVEALEVAADVAVVEFAHDAGDELEFNKFCAVDVRPGLADIVWAWQGDRPAAPDVAAATVECSPA.

One can recognise a Protein kinase domain in the interval 22-277; the sequence is YELGRLLGQG…IPEIMRTPWF (256 aa). ATP-binding positions include 28-36 and K51; that span reads LGQGTFAKV. The active-site Proton acceptor is the D145. The activation loop stretch occupies residues 163-192; the sequence is DFGLAALPEQLRQDGLLHTQCGTPAYVAPE. One can recognise an NAF domain in the interval 309–335; that stretch reads AMSPRTCNAFQLISSMSSGFDLSGMFE. The tract at residues 339–368 is PPI; that stretch reads KAATVFTSRAPAATVIQKLEAVGRSLGYSA.

The protein belongs to the protein kinase superfamily. CAMK Ser/Thr protein kinase family. SNF1 subfamily. Mn(2+) serves as cofactor.

It catalyses the reaction L-seryl-[protein] + ATP = O-phospho-L-seryl-[protein] + ADP + H(+). It carries out the reaction L-threonyl-[protein] + ATP = O-phospho-L-threonyl-[protein] + ADP + H(+). CIPK serine-threonine protein kinases interact with CBL proteins. Binding of a CBL protein to the regulatory NAF domain of CIPK protein lead to the activation of the kinase in a calcium-dependent manner. This is CBL-interacting protein kinase 16 (CIPK16) from Oryza sativa subsp. japonica (Rice).